The following is a 47-amino-acid chain: MENSSSETYSLLIAMVTITFGLTGYGLYTAFGPPSKELEDPFEEHED.

Residues 9-31 (YSLLIAMVTITFGLTGYGLYTAF) traverse the membrane as a helical segment.

This sequence belongs to the PsbN family.

The protein resides in the cellular thylakoid membrane. Its function is as follows. May play a role in photosystem I and II biogenesis. In Prochlorococcus marinus (strain MIT 9303), this protein is Protein PsbN.